The primary structure comprises 124 residues: Fluoride-specific ion channel FluC 1 (124 aa).

Helical transmembrane passes span 4–24, 36–56, 67–87, and 103–123; these read VLIG…GAWI, GTFA…GLVV, VVLG…LLDL, and AALS…LGWG. Residues Gly-75 and Thr-78 each coordinate Na(+).

It belongs to the fluoride channel Fluc/FEX (TC 1.A.43) family.

It localises to the cell membrane. The enzyme catalyses fluoride(in) = fluoride(out). Na(+) is not transported, but it plays an essential structural role and its presence is essential for fluoride channel function. Its function is as follows. Fluoride-specific ion channel. Important for reducing fluoride concentration in the cell, thus reducing its toxicity. The protein is Fluoride-specific ion channel FluC 1 of Symbiobacterium thermophilum (strain DSM 24528 / JCM 14929 / IAM 14863 / T).